Reading from the N-terminus, the 204-residue chain is Small ribosomal subunit protein uS4 (204 aa).

An S4 RNA-binding domain is found at 92–153; that stretch reads RRLDALVLRS…RSKEKTLFTI (62 aa).

It belongs to the universal ribosomal protein uS4 family. As to quaternary structure, part of the 30S ribosomal subunit. Contacts protein S5. The interaction surface between S4 and S5 is involved in control of translational fidelity.

Its function is as follows. One of the primary rRNA binding proteins, it binds directly to 16S rRNA where it nucleates assembly of the body of the 30S subunit. Functionally, with S5 and S12 plays an important role in translational accuracy. The sequence is that of Small ribosomal subunit protein uS4 from Streptomyces coelicolor (strain ATCC BAA-471 / A3(2) / M145).